Consider the following 318-residue polypeptide: Peroxisomal targeting signal 2 receptor (318 aa).

6 WD repeats span residues D60–D91, E104–D136, G148–D179, A191–D222, G235–N266, and H279–D310.

Belongs to the WD repeat peroxin-7 family. Interacts with PEX5; interaction only takes place when PEX7 is associated with cargo proteins. Interacts with VWA8.

Its subcellular location is the cytoplasm. It localises to the cytosol. It is found in the peroxisome matrix. Its function is as follows. Receptor required for the peroxisomal import of proteins containing a C-terminal PTS2-type peroxisomal targeting signal. Specifically binds to cargo proteins containing a PTS2 peroxisomal targeting signal in the cytosol. Cargo protein-binding triggers interaction with PEX5 and formation of a ternary complex composed of PEX5 and PEX7 along with PTS2-containing cargo proteins, which is tranlocated into peroxisomes by passing through the PEX13-PEX14 docking complex. The sequence is that of Peroxisomal targeting signal 2 receptor from Mus musculus (Mouse).